The primary structure comprises 157 residues: UPF0758 protein VC_0510 (157 aa).

The region spanning 36-157 (ALTNPDATKE…CTSFAERGWL (122 aa)) is the MPN domain. H107, H109, and D120 together coordinate Zn(2+). Residues 107–120 (HNHPSGDSTPSQAD) carry the JAMM motif motif.

The protein belongs to the UPF0758 family.

In Vibrio cholerae serotype O1 (strain ATCC 39315 / El Tor Inaba N16961), this protein is UPF0758 protein VC_0510.